Consider the following 279-residue polypeptide: Tryptophan 2,3-dioxygenase (279 aa).

Residues 48 to 52, tyrosine 110, and arginine 114 contribute to the substrate site; that span reads FIIQH. Residue histidine 237 coordinates heme. A substrate-binding site is contributed by threonine 251.

The protein belongs to the tryptophan 2,3-dioxygenase family. As to quaternary structure, homotetramer. The cofactor is heme.

The catalysed reaction is L-tryptophan + O2 = N-formyl-L-kynurenine. Its pathway is amino-acid degradation; L-tryptophan degradation via kynurenine pathway; L-kynurenine from L-tryptophan: step 1/2. Its function is as follows. Heme-dependent dioxygenase that catalyzes the oxidative cleavage of the L-tryptophan (L-Trp) pyrrole ring and converts L-tryptophan to N-formyl-L-kynurenine. Catalyzes the oxidative cleavage of the indole moiety. The chain is Tryptophan 2,3-dioxygenase from Ruegeria sp. (strain TM1040) (Silicibacter sp.).